The sequence spans 383 residues: Mannan endo-1,4-beta-mannosidase (383 aa).

Positions 1–35 are cleaved as a signal peptide; the sequence is MRNARSTLITTAGMAFAVLGLLFALAGPSAGRAEA. Residues 339–377 enclose the CBM10 domain; that stretch reads GGSTGGTAPNGYPYCVNGGASDPDGDGWGWENSRSCVVR.

This sequence belongs to the glycosyl hydrolase 5 (cellulase A) family. As to quaternary structure, monomer.

It catalyses the reaction Random hydrolysis of (1-&gt;4)-beta-D-mannosidic linkages in mannans, galactomannans and glucomannans.. The protein is Mannan endo-1,4-beta-mannosidase (manA) of Streptomyces lividans.